A 416-amino-acid polypeptide reads, in one-letter code: D-amino acid dehydrogenase (416 aa).

3-17 (ITILGSGVIGVTTAY) contributes to the FAD binding site.

This sequence belongs to the DadA oxidoreductase family. FAD serves as cofactor.

The enzyme catalyses a D-alpha-amino acid + A + H2O = a 2-oxocarboxylate + AH2 + NH4(+). Oxidative deamination of D-amino acids. In Brucella suis biovar 1 (strain 1330), this protein is D-amino acid dehydrogenase.